The primary structure comprises 537 residues: Mitochondria-eating protein (537 aa).

The segment at 1–273 (MADNLRRLVS…PCSRSHSRSR (273 aa)) is interaction with YWHAG/14-3-3 protein gamma. Phosphoserine is present on residues serine 85, serine 127, serine 154, and serine 157. Residues 115-253 (GTRDIQQLDA…SAEKSVLQGR (139 aa)) are a coiled coil. 2 disordered regions span residues 171-221 (QLKS…ANQR) and 249-293 (VLQG…AKLS). A compositionally biased stretch (basic and acidic residues) spans 179–217 (EESRHRNSDRRRSEKRGSERRRVELRGSEQRVSDLDRRS). The span at 253 to 287 (RSARSRSPSPAPCSRSHSRSRSTSPSSAKARTPSP) shows a compositional bias: low complexity. Phosphoserine occurs at positions 286 and 508.

It belongs to the MIEAP family. As to quaternary structure, interacts (via coiled-coil domains) with BNIP3L (via BH3 domain). Interacts (via coiled-coil domains) with BNIP3 (via BH3 domain). Interacts with YWHAG/14-3-3 protein gamma; a protein that also plays a role in MALM.

Its subcellular location is the cytoplasm. The protein resides in the cytosol. It is found in the mitochondrion outer membrane. The protein localises to the mitochondrion matrix. Its function is as follows. Key regulator of mitochondrial quality that mediates the repairing or degradation of unhealthy mitochondria in response to mitochondrial damage. Mediator of mitochondrial protein catabolic process (also named MALM) by mediating the degradation of damaged proteins inside mitochondria by promoting the accumulation in the mitochondrial matrix of hydrolases that are characteristic of the lysosomal lumen. Also involved in mitochondrion degradation of damaged mitochondria by promoting the formation of vacuole-like structures (named MIV), which engulf and degrade unhealthy mitochondria by accumulating lysosomes. The physical interaction of SPATA18/MIEAP, BNIP3 and BNIP3L/NIX at the mitochondrial outer membrane regulates the opening of a pore in the mitochondrial double membrane in order to mediate the translocation of lysosomal proteins from the cytoplasm to the mitochondrial matrix. Binds cardiolipin. May form molecular condensates (non-membrane-bounded organelles) within mitochondria that compartmentalize and promote cardiolipin metabolism. The protein is Mitochondria-eating protein (SPATA18) of Bos taurus (Bovine).